We begin with the raw amino-acid sequence, 368 residues long: N-acetylneuraminate epimerase (368 aa).

The signal sequence occupies residues 1–19; the sequence is MNKTITALTIIMASFATNA. Kelch repeat units lie at residues 40-84, 86-137, 139-173, 174-219, 222-265, 287-336, and 338-367; these read TVYI…AFID, NLYV…FVHN, KAYV…KINA, HYFD…VNKG, TWLI…VAGG, ENYQ…PWNN, and LLII…VTVQ. Glu228 serves as the catalytic Proton acceptor.

Belongs to the NanM family. Homodimer.

Its subcellular location is the periplasm. The enzyme catalyses N-acetyl-alpha-neuraminate = N-acetyl-beta-neuraminate. In terms of biological role, converts alpha-N-acetylneuranimic acid (Neu5Ac) to the beta-anomer, accelerating the equilibrium between the alpha- and beta-anomers. Probably facilitates sialidase-negative bacteria to compete successfully for limited amounts of extracellular Neu5Ac, which is likely taken up in the beta-anomer. In addition, the rapid removal of sialic acid from solution might be advantageous to the bacterium to damp down host responses. This is N-acetylneuraminate epimerase from Escherichia coli O1:K1 / APEC.